The following is a 265-amino-acid chain: uncharacterized protein (265 aa).

The active site involves Glu47.

It belongs to the PhzF family.

This is an uncharacterized protein from Halalkalibacterium halodurans (strain ATCC BAA-125 / DSM 18197 / FERM 7344 / JCM 9153 / C-125) (Bacillus halodurans).